Reading from the N-terminus, the 499-residue chain is MPSLFRASLLFSLGILLSRIFGYVRDATVAYYFGASAVSDAFFIAFRIPNAFRRIFGEGGFNAVFIPFYGEAVKQNREEEFLRKTFGLLITFSLSVVIIGLLFPEEIISVISPGIKEKETFSYAVEFLKFTILYLPLVSFYAYSMAILLVQGKFFVPSVSQTLFNLGFILSLVILFHTLGHYSLALAVLIGGLFQIIPNTFLLFKEKLLKIPKFSLDREIKTFLKKFLFTLGGFSANQLSLFVDTFLASFLKVGSISYVYYAARIYLLPISLFSISLSNTLLALVSTKKDKEKDTDTALKLTLMLSIPSSFGLFFLSREIVSVLYKRGNFSEEDLFYTSGLLSLYAFSVPFYSLQHILKTVYYSKKNVEIPTKSAFLSVFLEALFGSVFIFLLNFGVYSFPLAALISSSSVLVYLYQKLPQKVSIPFGNLIKYLIASSFMGGLVYLTESLTQNPFILVSFIPIYALFYYVFLIILREELAILISYGIFRRGKILQRESN.

Transmembrane regions (helical) follow at residues 4–24 (LFRA…FGYV), 26–46 (DATV…FIAF), 88–108 (LLIT…EEII), 130–150 (FTIL…ILLV), 154–174 (FFVP…SLVI), 184–204 (LALA…FLLF), 227–247 (FLFT…DTFL), 265–285 (IYLL…LALV), 297–317 (TALK…FFLS), 335–355 (LFYT…YSLQ), 375–395 (AFLS…LLNF), 396–416 (GVYS…VYLY), 425–445 (IPFG…GLVY), and 455–475 (FILV…LIIL).

Belongs to the MurJ/MviN family.

It is found in the cell inner membrane. Its pathway is cell wall biogenesis; peptidoglycan biosynthesis. Functionally, involved in peptidoglycan biosynthesis. Transports lipid-linked peptidoglycan precursors from the inner to the outer leaflet of the cytoplasmic membrane. This is Probable lipid II flippase MurJ from Aquifex aeolicus (strain VF5).